Consider the following 159-residue polypeptide: SsrA-binding protein (159 aa).

Basic and acidic residues predominate over residues 137–147; sequence LAERQANRETE. Residues 137 to 159 form a disordered region; it reads LAERQANRETEQAVGRRLKGMHD.

This sequence belongs to the SmpB family.

Its subcellular location is the cytoplasm. Its function is as follows. Required for rescue of stalled ribosomes mediated by trans-translation. Binds to transfer-messenger RNA (tmRNA), required for stable association of tmRNA with ribosomes. tmRNA and SmpB together mimic tRNA shape, replacing the anticodon stem-loop with SmpB. tmRNA is encoded by the ssrA gene; the 2 termini fold to resemble tRNA(Ala) and it encodes a 'tag peptide', a short internal open reading frame. During trans-translation Ala-aminoacylated tmRNA acts like a tRNA, entering the A-site of stalled ribosomes, displacing the stalled mRNA. The ribosome then switches to translate the ORF on the tmRNA; the nascent peptide is terminated with the 'tag peptide' encoded by the tmRNA and targeted for degradation. The ribosome is freed to recommence translation, which seems to be the essential function of trans-translation. The protein is SsrA-binding protein of Nocardioides sp. (strain ATCC BAA-499 / JS614).